The primary structure comprises 226 residues: uncharacterized protein (226 aa).

An N-terminal signal peptide occupies residues 1-18 (MRRIGLCISLLVTVLVMS).

This is an uncharacterized protein from Bacillus subtilis (strain 168).